Here is a 479-residue protein sequence, read N- to C-terminus: Anaerobic nitric oxide reductase flavorubredoxin (479 aa).

The tract at residues 30–210 (LRGSSYNSYL…PFSRLVTPKI (181 aa)) is zinc metallo-hydrolase. Positions 79, 81, 83, 147, 166, and 227 each coordinate Fe cation. The Flavodoxin-like domain maps to 254–393 (ITIFYDTMSN…LCRQHGRDIA (140 aa)). Residues 260–264 (TMSNN) and 342–369 (AFGS…EMSL) each bind FMN. The 52-residue stretch at 423–474 (GPKMQCSVCQWIYDPAQGEPLQDVAPGTPWSDVPDNFLCPECSLGKDVFDVL) folds into the Rubredoxin-like domain. Fe cation-binding residues include C428, C431, C461, and C464.

In the N-terminal section; belongs to the zinc metallo-hydrolase group 3 family. As to quaternary structure, homotetramer. The cofactor is Fe cation. It depends on FMN as a cofactor.

It is found in the cytoplasm. It participates in nitrogen metabolism; nitric oxide reduction. In terms of biological role, anaerobic nitric oxide reductase; uses NADH to detoxify nitric oxide (NO), protecting several 4Fe-4S NO-sensitive enzymes. Has at least 2 reductase partners, only one of which (NorW, flavorubredoxin reductase) has been identified. NO probably binds to the di-iron center; electrons enter from the NorW at rubredoxin and are transferred sequentially to the FMN center and the di-iron center. Also able to function as an aerobic oxygen reductase. The chain is Anaerobic nitric oxide reductase flavorubredoxin from Salmonella choleraesuis (strain SC-B67).